A 514-amino-acid polypeptide reads, in one-letter code: MPTRRLLMRQVREILKLRLDVGLSNRIIAKQLGVGETSVRDTLKRLHREGLTWPLPDTISDRELEQRLYGTPGKKAGRRKQSEPDWSAVARELKRKHVTLQVLWEEYIARDPDGFRYSRYCELFRNWHGRLPLVMRQSHAGGEKLFVDYAGDKVAVVDRKTGVVRDAHIFVAVMGASSLSFALATWSEQLPDWIEAHNAAYRFFGGVTQLLVSDNTKCAVIKACHFDPMVNRSYTDMARHYSTAVFPARPRKPRDKAKVENCVGIVERWLLGRLRNRTFYSLADLNKAIADLITRLNDERVIRQYGKTRRALFDELDAPNLKPLPAEPWVHAEWRRCRVGIDYHIELSRHFYSVPYRFARSEVEVRYTIRTVEIFLGGDRIAAHVRGSSNGRHTTVAVHMPPNHQRYREWTPAKIRSEAKRIGPMLRVLVDRIIEKRAHPEQGYRACVGIIGLERRFGVDRLEAAAQRALEFQVLNYPGIKSILEKELDRLPRSERLEQEPIQHSNLRGSEYYH.

The region spanning 11–93 (VREILKLRLD…PDWSAVAREL (83 aa)) is the HTH IS408-type domain. Residues 128–317 (HGRLPLVMRQ…TRRALFDELD (190 aa)) enclose the Integrase catalytic domain.

Belongs to the transposase IS21/IS408/IS1162 family.

The protein is Putative transposase y4uI of Sinorhizobium fredii (strain NBRC 101917 / NGR234).